Reading from the N-terminus, the 306-residue chain is Tyrosine recombinase XerC (306 aa).

The Core-binding (CB) domain occupies 6–92 (NTLYLQTKPY…ALRQWFSYLI (87 aa)). The Tyr recombinase domain maps to 113 to 292 (RLPKNIDAEQ…DFQHLAKIYD (180 aa)). Active-site residues include Arg-152, Lys-176, His-244, Arg-247, and His-270. The active-site O-(3'-phospho-DNA)-tyrosine intermediate is Tyr-279.

It belongs to the 'phage' integrase family. XerC subfamily. As to quaternary structure, forms a cyclic heterotetrameric complex composed of two molecules of XerC and two molecules of XerD.

It localises to the cytoplasm. Site-specific tyrosine recombinase, which acts by catalyzing the cutting and rejoining of the recombining DNA molecules. The XerC-XerD complex is essential to convert dimers of the bacterial chromosome into monomers to permit their segregation at cell division. It also contributes to the segregational stability of plasmids. The sequence is that of Tyrosine recombinase XerC from Actinobacillus pleuropneumoniae serotype 7 (strain AP76).